We begin with the raw amino-acid sequence, 230 residues long: Nucleoside diphosphate kinase 2, chloroplastic (230 aa).

A chloroplast-targeting transit peptide spans M1–S64. The ATP site is built by K90, F138, R166, T172, R183, and N193. H196 (pros-phosphohistidine intermediate) is an active-site residue.

It belongs to the NDK family. The cofactor is Mg(2+).

It localises to the plastid. The protein localises to the chloroplast. The catalysed reaction is a 2'-deoxyribonucleoside 5'-diphosphate + ATP = a 2'-deoxyribonucleoside 5'-triphosphate + ADP. The enzyme catalyses a ribonucleoside 5'-diphosphate + ATP = a ribonucleoside 5'-triphosphate + ADP. Major role in the synthesis of nucleoside triphosphates other than ATP. The ATP gamma phosphate is transferred to the NDP beta phosphate via a ping-pong mechanism, using a phosphorylated active-site intermediate. This Pisum sativum (Garden pea) protein is Nucleoside diphosphate kinase 2, chloroplastic (NDPK2).